Consider the following 715-residue polypeptide: Probable ubiquitin thioesterase DG1039 (715 aa).

Residues 86 to 302 (KSRNEIKRKA…NNQTDDKLDN (217 aa)) are a coiled coil. Residues 287 to 302 (NKKLENNNQTDDKLDN) are compositionally biased toward basic and acidic residues. 3 disordered regions span residues 287–367 (NKKL…YNST), 398–450 (QYKQ…QQQY), and 502–527 (LAQS…SSEA). Positions 339-349 (TTAQLPLSITQ) are enriched in polar residues. The span at 398–409 (QYKQQQQQQPIQ) shows a compositional bias: low complexity. 2 stretches are compositionally biased toward polar residues: residues 410–427 (SPTN…NNYN) and 502–525 (LAQS…IDSS). Residues 537–666 (IIVHGEVFQE…IFRLTDPPGL (130 aa)) form the MPN domain. Zn(2+) contacts are provided by H615, H617, D628, H630, C672, H678, and H680. Positions 615–628 (HTHPTQDCFLSAVD) match the JAMM motif motif.

The protein belongs to the peptidase M67C family. The cofactor is Zn(2+).

Its function is as follows. May be a zinc metalloprotease that specifically cleaves ubiquitin chains. The chain is Probable ubiquitin thioesterase DG1039 (DG1039) from Dictyostelium discoideum (Social amoeba).